A 514-amino-acid polypeptide reads, in one-letter code: Membrane-bound lytic murein transglycosylase F (514 aa).

An N-terminal signal peptide occupies residues M1–Q30. The segment at D31–V271 is non-LT domain. An LT domain region spans residues G272–Q514. E316 is an active-site residue. Positions P482–Q514 are disordered. Positions V490–A499 are enriched in polar residues.

In the N-terminal section; belongs to the bacterial solute-binding protein 3 family. It in the C-terminal section; belongs to the transglycosylase Slt family.

Its subcellular location is the cell outer membrane. The catalysed reaction is Exolytic cleavage of the (1-&gt;4)-beta-glycosidic linkage between N-acetylmuramic acid (MurNAc) and N-acetylglucosamine (GlcNAc) residues in peptidoglycan, from either the reducing or the non-reducing ends of the peptidoglycan chains, with concomitant formation of a 1,6-anhydrobond in the MurNAc residue.. Its function is as follows. Murein-degrading enzyme that degrades murein glycan strands and insoluble, high-molecular weight murein sacculi, with the concomitant formation of a 1,6-anhydromuramoyl product. Lytic transglycosylases (LTs) play an integral role in the metabolism of the peptidoglycan (PG) sacculus. Their lytic action creates space within the PG sacculus to allow for its expansion as well as for the insertion of various structures such as secretion systems and flagella. The polypeptide is Membrane-bound lytic murein transglycosylase F (Photobacterium profundum (strain SS9)).